The chain runs to 320 residues: MPPRLPGPQGLRSLTLCLRPAVASPAQALQPLIQTANISQKEKKRKMKQDPYGWAQAQQRKAVNVKRQAELQAQRDAAWGDPVKGITTPFVESFDSAGQASVSPPKVGPDGQLVEEPKPLPTSPHLRNYLLNKDEFDSAIQYAEHILKPIKAEDRLTADPEKEDEEAREHAARHAKAVAALERIAKLEHGGAKDRKHANIRRCIETFGRHITDQSLERPTPPLARGVEPKPQPVRAGPDTGSSEVQIAILTSKIRALSKALEGHGGNRDKNNKRSLRRLCHKRQRLLRYMERKERGSGRWHHMLETLGLTPATWKGQITL.

2 disordered regions span residues 37 to 60 and 214 to 242; these read NISQ…AQQR and QSLE…DTGS.

The protein belongs to the universal ribosomal protein uS15 family. As to quaternary structure, component of the mitochondrial small ribosomal subunit (mt-SSU). Mature N.crassa 74S mitochondrial ribosomes consist of a small (37S) and a large (54S) subunit. The 37S small subunit contains a 16S ribosomal RNA (16S mt-rRNA) and 32 different proteins. The 54S large subunit contains a 23S rRNA (23S mt-rRNA) and 42 different proteins.

It localises to the mitochondrion. Component of the mitochondrial ribosome (mitoribosome), a dedicated translation machinery responsible for the synthesis of mitochondrial genome-encoded proteins, including at least some of the essential transmembrane subunits of the mitochondrial respiratory chain. The mitoribosomes are attached to the mitochondrial inner membrane and translation products are cotranslationally integrated into the membrane. This is Small ribosomal subunit protein uS15m (mrps28) from Neurospora crassa (strain ATCC 24698 / 74-OR23-1A / CBS 708.71 / DSM 1257 / FGSC 987).